The sequence spans 535 residues: Cytochrome c oxidase subunit 1 (535 aa).

The chain crosses the membrane as a helical span at residues 21-43 (VLYFIFALFSAMIGTGLSAIIRL). Positions 44 and 49 each coordinate Ca(2+). A run of 6 helical transmembrane segments spans residues 63–85 (VITA…GGFG), 106–128 (ISFW…EAGA), 153–175 (IFSL…TTFI), 188–210 (PLFA…VLAA), 242–264 (YWWN…SHAV), and 271–293 (PVFG…FCVW). Histidine 67 contacts Fe(II)-heme a. Cu cation is bound at residue histidine 246. Residues 246 to 250 (HPEVY) constitute a cross-link (1'-histidyl-3'-tyrosine (His-Tyr)). Position 250 (tyrosine 250) interacts with O2. Cu cation-binding residues include histidine 295 and histidine 296. Transmembrane regions (helical) follow at residues 308–330 (AYFT…SWLA) and 342–364 (TALF…VVLA). Residues histidine 373 and aspartate 374 each coordinate Mg(2+). 3 consecutive transmembrane segments (helical) span residues 379–401 (VAHF…WYLW), 414–436 (LSHI…MHFL), and 456–478 (NQVA…YVVY). A heme a3-binding site is contributed by histidine 381. Histidine 383 contacts Fe(II)-heme a.

The protein belongs to the heme-copper respiratory oxidase family. As to quaternary structure, component of the cytochrome c oxidase (complex IV, CIV), a multisubunit enzyme composed of a catalytic core of 3 subunits and several supernumerary subunits. The complex exists as a monomer or a dimer and forms supercomplexes (SCs) in the inner mitochondrial membrane with ubiquinol-cytochrome c oxidoreductase (cytochrome b-c1 complex, complex III, CIII). It depends on heme as a cofactor. Requires Cu cation as cofactor.

It is found in the mitochondrion inner membrane. It carries out the reaction 4 Fe(II)-[cytochrome c] + O2 + 8 H(+)(in) = 4 Fe(III)-[cytochrome c] + 2 H2O + 4 H(+)(out). It functions in the pathway energy metabolism; oxidative phosphorylation. Component of the cytochrome c oxidase, the last enzyme in the mitochondrial electron transport chain which drives oxidative phosphorylation. The respiratory chain contains 3 multisubunit complexes succinate dehydrogenase (complex II, CII), ubiquinol-cytochrome c oxidoreductase (cytochrome b-c1 complex, complex III, CIII) and cytochrome c oxidase (complex IV, CIV), that cooperate to transfer electrons derived from NADH and succinate to molecular oxygen, creating an electrochemical gradient over the inner membrane that drives transmembrane transport and the ATP synthase. Cytochrome c oxidase is the component of the respiratory chain that catalyzes the reduction of oxygen to water. Electrons originating from reduced cytochrome c in the intermembrane space (IMS) are transferred via the dinuclear copper A center (CU(A)) of subunit 2 and heme A of subunit 1 to the active site in subunit 1, a binuclear center (BNC) formed by heme A3 and copper B (CU(B)). The BNC reduces molecular oxygen to 2 water molecules using 4 electrons from cytochrome c in the IMS and 4 protons from the mitochondrial matrix. The chain is Cytochrome c oxidase subunit 1 (COX1) from Yarrowia lipolytica (strain CLIB 122 / E 150) (Yeast).